Reading from the N-terminus, the 280-residue chain is uncharacterized protein (280 aa).

The N-terminal stretch at 1–35 (MQGQVLKKVLKKYVHIGMCTLFLHAILLFPCVAQA) is a signal peptide.

This is an uncharacterized protein from Treponema pallidum (strain Nichols).